The primary structure comprises 151 residues: Deoxyuridine 5'-triphosphate nucleotidohydrolase (151 aa).

Residues 70–72 (RSG), Asn83, 87–89 (LID), and Met97 each bind substrate.

It belongs to the dUTPase family. Mg(2+) is required as a cofactor.

The enzyme catalyses dUTP + H2O = dUMP + diphosphate + H(+). It functions in the pathway pyrimidine metabolism; dUMP biosynthesis; dUMP from dCTP (dUTP route): step 2/2. Functionally, this enzyme is involved in nucleotide metabolism: it produces dUMP, the immediate precursor of thymidine nucleotides and it decreases the intracellular concentration of dUTP so that uracil cannot be incorporated into DNA. This is Deoxyuridine 5'-triphosphate nucleotidohydrolase from Pseudomonas entomophila (strain L48).